The primary structure comprises 232 residues: tRNA (guanine-N(7)-)-methyltransferase (232 aa).

Positions 38, 63, 90, and 113 each coordinate S-adenosyl-L-methionine. The active site involves Asp-113. Substrate is bound by residues Lys-117 and Asp-149.

This sequence belongs to the class I-like SAM-binding methyltransferase superfamily. TrmB family.

The enzyme catalyses guanosine(46) in tRNA + S-adenosyl-L-methionine = N(7)-methylguanosine(46) in tRNA + S-adenosyl-L-homocysteine. Its pathway is tRNA modification; N(7)-methylguanine-tRNA biosynthesis. In terms of biological role, catalyzes the formation of N(7)-methylguanine at position 46 (m7G46) in tRNA. The chain is tRNA (guanine-N(7)-)-methyltransferase from Syntrophotalea carbinolica (strain DSM 2380 / NBRC 103641 / GraBd1) (Pelobacter carbinolicus).